Reading from the N-terminus, the 349-residue chain is Isopentenyl-diphosphate delta-isomerase (349 aa).

A substrate-binding site is contributed by Arg-6 to Lys-7. FMN contacts are provided by residues Ala-62 to Thr-64, Ser-93, and Asn-122. Gln-152 is a binding site for substrate. Glu-153 contacts Mg(2+). Residues Lys-184, Thr-214, Gly-258–Gly-259, and Ala-280–Gly-281 each bind FMN.

The protein belongs to the IPP isomerase type 2 family. As to quaternary structure, homooctamer. Dimer of tetramers. FMN is required as a cofactor. The cofactor is NADPH. Mg(2+) serves as cofactor.

The protein localises to the cytoplasm. The enzyme catalyses isopentenyl diphosphate = dimethylallyl diphosphate. In terms of biological role, involved in the biosynthesis of isoprenoids. Catalyzes the 1,3-allylic rearrangement of the homoallylic substrate isopentenyl (IPP) to its allylic isomer, dimethylallyl diphosphate (DMAPP). The sequence is that of Isopentenyl-diphosphate delta-isomerase from Bacillus cytotoxicus (strain DSM 22905 / CIP 110041 / 391-98 / NVH 391-98).